We begin with the raw amino-acid sequence, 241 residues long: DNA repair protein RecO (241 aa).

It belongs to the RecO family.

Involved in DNA repair and RecF pathway recombination. The protein is DNA repair protein RecO of Ruegeria sp. (strain TM1040) (Silicibacter sp.).